We begin with the raw amino-acid sequence, 250 residues long: Phosphonates import ATP-binding protein PhnC (250 aa).

In terms of domain architecture, ABC transporter spans 2-247; sequence ILFNNVNKVW…KLDAQAMKKI (246 aa). Residue 35–42 coordinates ATP; the sequence is GLSGAGKT.

It belongs to the ABC transporter superfamily. Phosphonates importer (TC 3.A.1.9.1) family. The complex is composed of two ATP-binding proteins (PhnC), two transmembrane proteins (PhnE) and a solute-binding protein (PhnD).

It localises to the cell membrane. The catalysed reaction is phosphonate(out) + ATP + H2O = phosphonate(in) + ADP + phosphate + H(+). Functionally, part of the ABC transporter complex PhnCDE involved in phosphonates import. Responsible for energy coupling to the transport system. The sequence is that of Phosphonates import ATP-binding protein PhnC from Mycoplasma capricolum subsp. capricolum (strain California kid / ATCC 27343 / NCTC 10154).